A 199-amino-acid chain; its full sequence is Superoxide dismutase [Cu-Zn] (199 aa).

A signal peptide spans 1–22; that stretch reads MKLTKVALFSLGLFGFSSMALA. Histidine 92, histidine 94, and histidine 117 together coordinate Cu cation. Cysteine 99 and cysteine 195 are oxidised to a cystine. Zn(2+)-binding residues include histidine 117, histidine 126, histidine 135, and aspartate 138. Cu cation is bound at residue histidine 173.

Belongs to the Cu-Zn superoxide dismutase family. In terms of assembly, homodimer. Cu cation is required as a cofactor. Requires Zn(2+) as cofactor.

It is found in the periplasm. The enzyme catalyses 2 superoxide + 2 H(+) = H2O2 + O2. Functionally, destroys radicals which are normally produced within the cells and which are toxic to biological systems. May play a role in the interactive biology of organisms with their hosts and so contribute to their capacity to cause disease. The protein is Superoxide dismutase [Cu-Zn] (sodC) of Haemophilus ducreyi (strain 35000HP / ATCC 700724).